The chain runs to 593 residues: MQIGKIIKVSGPLVMAENMSEASIQDMCLVGDLGVIGEIIEMRQDVASIQVYEETSGIGPGEPVRSTGEALSVELGPGIISQMFDGIQRPLDTFMEVTQSNFLGRGVQLPALDHEKQWWFEATIEEGTEVSAGDIIGYVDETKIIQHKIMVPNGIKGTVQKIESGSFTIDDPICVIETEQGLKELTMMQKWPVRRGRPIKQKLNPDVPMITGQRVIDTFFPVTKGGAAAVPGPFGAGKTVVQHQIAKWSDVDLVVYVGCGERGNEMTDVVNEFPELIDPNTGESLMERTVLIANTSNMPVAAREASIYTGITIAEYFRDMGYDVAIMADSTSRWAEALREMSGRLEEMPGDEGYPAYLGSRLAEYYERSGRVIALGSDQREGSITAISAVSPSGGDISEPVTQNTLRVVKVFWGLDSSLAQKRHFPSINWIQSYSLYSTEVGRYMDQILQQDWSDMVTEGMRILQEEEQLNEIVRLVGIDSLSDNDRLTLEVAKSIREDYLQQNAFDDVDTFTSREKQFNMLKVILTFGKEARKALSLGAYFNEIMEGTVAVRERISRSKYIPEEELAKISSINEEIKETIQLIVSEGGMTDD.

Position 232 to 239 (232 to 239 (GPFGAGKT)) interacts with ATP.

This sequence belongs to the ATPase alpha/beta chains family.

It catalyses the reaction 4 Na(+)(in) + ATP + H2O = 4 Na(+)(out) + ADP + phosphate + H(+). Involved in ATP-driven sodium extrusion. The polypeptide is V-type sodium ATPase catalytic subunit A (ntpA) (Enterococcus hirae (strain ATCC 9790 / DSM 20160 / JCM 8729 / LMG 6399 / NBRC 3181 / NCIMB 6459 / NCDO 1258 / NCTC 12367 / WDCM 00089 / R)).